The primary structure comprises 150 residues: MNKTSVPSIDSIDRQWYLVDAENQTLGRLATEVASVLRGKNKASFTPHLDTGDFVVVVNADKIRVSGNKPQQKLYRRHSGRPGGMKVETFTHLQERLPERIVEKAIKGMLPHNALGRQMFRKLKVYKGAEHPHAAQQPKPLQLDPAATAQ.

The disordered stretch occupies residues 129 to 150; the sequence is AEHPHAAQQPKPLQLDPAATAQ.

Belongs to the universal ribosomal protein uL13 family. As to quaternary structure, part of the 50S ribosomal subunit.

Its function is as follows. This protein is one of the early assembly proteins of the 50S ribosomal subunit, although it is not seen to bind rRNA by itself. It is important during the early stages of 50S assembly. In Synechococcus sp. (strain WH7803), this protein is Large ribosomal subunit protein uL13.